Here is a 176-residue protein sequence, read N- to C-terminus: Conidiation-specific protein 8 (176 aa).

Disordered stretches follow at residues 1 to 66 (MDDT…SKLI) and 79 to 162 (AASE…PQGF). The span at 79–99 (AASEAFRSERSASTSSTTSET) shows a compositional bias: low complexity.

The protein is Conidiation-specific protein 8 (con-8) of Neurospora crassa (strain ATCC 24698 / 74-OR23-1A / CBS 708.71 / DSM 1257 / FGSC 987).